The following is a 235-amino-acid chain: uncharacterized protein (235 aa).

This is an uncharacterized protein from Mycoplasma pneumoniae (strain ATCC 29342 / M129 / Subtype 1) (Mycoplasmoides pneumoniae).